The following is a 928-amino-acid chain: Chromatin structure-remodeling complex subunit RSC1 (928 aa).

Bromo domains lie at 4–112 and 240–342; these read QDNG…IVHN and RIKN…VRIE. In terms of domain architecture, BAH spans 368–486; it reads EKYQIGDWVL…ESDKVFNKIR (119 aa). Disordered stretches follow at residues 558 to 586, 598 to 635, 657 to 701, and 871 to 908; these read DDLG…GKID, TTSS…NTPL, HNLL…KPAS, and IASG…TTSA. Residues 600–620 show a composition bias toward polar residues; it reads SSMPRVNSSSTIRLPTLKQTK. Positions 621-631 are enriched in low complexity; it reads SIPSSNFRSSS. Over residues 667 to 679 the composition is skewed to polar residues; that stretch reads KFQSPSLLEQSSR. A Phosphoserine modification is found at serine 670. The span at 692–701 shows a compositional bias: low complexity; it reads SSTAPKKPAS. Positions 883 to 902 are enriched in acidic residues; sequence TAEESEDENEDTEDEHEIED.

Belongs to the RSC1 family. In terms of assembly, component of the two forms of the RSC complex composed of at least either RSC1 or RSC2, and ARP7, ARP9, LDB7, NPL6, RSC3, RSC30, RSC4, RSC58, RSC6, RSC8, RSC9, SFH1, STH1, HTL1 and probably RTT102. The complexes interact with histone and histone variant components of centromeric chromatin.

Its subcellular location is the nucleus. Its function is as follows. Component of the chromatin structure remodeling complex (RSC), which is involved in transcription regulation and nucleosome positioning. RSC is responsible for the transfer of a histone octamer from a nucleosome core particle to naked DNA. The reaction requires ATP and involves an activated RSC-nucleosome intermediate. Remodeling reaction also involves DNA translocation, DNA twist and conformational change. As a reconfigurer of centromeric and flanking nucleosomes, RSC complex is required both for proper kinetochore function in chromosome segregation and, via a PKC1-dependent signaling pathway, for organization of the cellular cytoskeleton. This subunit is involved in meiotic sporulation through regulating IME2 expression. The sequence is that of Chromatin structure-remodeling complex subunit RSC1 (RSC1) from Saccharomyces cerevisiae (strain ATCC 204508 / S288c) (Baker's yeast).